Consider the following 452-residue polypeptide: MRYLPLTPDDRAAMLGAIGASSIDELFADVPAGARLDGPIAGLPMHASELAVERHMGALARRNRAAGDGPFFLGAGAYRHHVPASVDHLIQRGEFLTAYTPYQPEIAQGTLQMLFEFQSQVARLFGTDVANASMYDGSTACWEAIVMARRITRRSKALLSTGLHPHYRSVARTMAKYTRDVLVDGDPRLEPGTDWAALAGRIDTETSCVVVQYPDILGRIDDMTTLAEACQTAGALLIAVVTEPVALGLIKSPGEMGADIVVGEGQSLGVGLQFGGPYVGLFACKSKYVRQMPGRLCGETVDANGKRGFVLTLSTREQHIRREKATSNICTNSGLCALAFSIHMTLLGEAGLRQLATINHGRAKAAATELAKVPAVSVMNDSFFNEFTLLLPTAARPVVHRLAEQDILGGVSLGRLYPDTAALENGLVVAVTETVTEADIAAFAAALKEVLA.

The protein belongs to the GcvP family. N-terminal subunit subfamily. As to quaternary structure, the glycine cleavage system is composed of four proteins: P, T, L and H. In this organism, the P 'protein' is a heterodimer of two subunits.

It carries out the reaction N(6)-[(R)-lipoyl]-L-lysyl-[glycine-cleavage complex H protein] + glycine + H(+) = N(6)-[(R)-S(8)-aminomethyldihydrolipoyl]-L-lysyl-[glycine-cleavage complex H protein] + CO2. Functionally, the glycine cleavage system catalyzes the degradation of glycine. The P protein binds the alpha-amino group of glycine through its pyridoxal phosphate cofactor; CO(2) is released and the remaining methylamine moiety is then transferred to the lipoamide cofactor of the H protein. The sequence is that of Probable glycine dehydrogenase (decarboxylating) subunit 1 from Sphingopyxis alaskensis (strain DSM 13593 / LMG 18877 / RB2256) (Sphingomonas alaskensis).